Consider the following 391-residue polypeptide: ATP-sensitive inward rectifier potassium channel 1 (391 aa).

The Cytoplasmic portion of the chain corresponds to 1 to 77 (MNASSRNVFD…IWTTVLDLKW (77 aa)). A Phosphoserine; by SGK1 modification is found at serine 44. Residues 78–102 (RYKMTIFITAFLGSWFFFGLLWYAV) traverse the membrane as a helical segment. Topologically, residues 103-127 (AYIHKDLPEFHPSANHTPCVENING) are extracellular. An N-linked (GlcNAc...) asparagine glycan is attached at asparagine 117. Positions 128 to 139 (LTSAFLFSLETQ) form an intramembrane region, helical; Pore-forming. The segment at residues 140–146 (VTIGYGF) is an intramembrane region (pore-forming). Positions 141–146 (TIGYGF) match the Selectivity filter motif. Residues 147-155 (RCVTEQCAT) are Extracellular-facing. The chain crosses the membrane as a helical span at residues 156 to 177 (AIFLLIFQSILGVIINSFMCGA). Residues 178-391 (ILAKISRPKK…EVNETDDTKM (214 aa)) are Cytoplasmic-facing. The tract at residues 180 to 207 (AKISRPKKRAKTITFSKNAVISKRGGKL) is polyphosphoinositide (PIP2)-binding. Residue 223–230 (GSHIYGKL) coordinates ATP.

This sequence belongs to the inward rectifier-type potassium channel (TC 1.A.2.1) family. KCNJ1 subfamily. Interacts with SGK1 and SLC9A3R2/NHERF2. Post-translationally, phosphorylation at Ser-44 by SGK1 is necessary for its expression at the cell membrane. In terms of tissue distribution, in the kidney and pancreatic islets. Lower levels in skeletal muscle, pancreas, spleen, brain, heart and liver.

Its subcellular location is the cell membrane. It carries out the reaction K(+)(in) = K(+)(out). Inhibited by WNK3. Activated by phosphatidylinositol 4,5 biphosphate (PtdIns(4,5)P2). In terms of biological role, inward rectifier potassium channels are characterized by a greater tendency to allow potassium to flow into the cell rather than out of it. Their voltage dependence is regulated by the concentration of extracellular potassium; as external potassium is raised, the voltage range of the channel opening shifts to more positive voltages. The inward rectification is mainly due to the blockage of outward current by internal magnesium. This channel is activated by internal ATP and can be blocked by external barium. In the kidney, probably plays a major role in potassium homeostasis. This chain is ATP-sensitive inward rectifier potassium channel 1 (KCNJ1), found in Homo sapiens (Human).